The chain runs to 273 residues: Cell division protein ZipA (273 aa).

Residue M1 is a topological domain, periplasmic. A helical transmembrane segment spans residues 2–22 (DIGLREWLIVIGIIVIAGILF). Residues 23–273 (DGWRRMRGGK…ERRQMTIKQR (251 aa)) lie on the Cytoplasmic side of the membrane. The interval 61-127 (VVNREHEPSL…DLQERPQKEQ (67 aa)) is disordered.

It belongs to the ZipA family. In terms of assembly, interacts with FtsZ via their C-terminal domains.

The protein localises to the cell inner membrane. In terms of biological role, essential cell division protein that stabilizes the FtsZ protofilaments by cross-linking them and that serves as a cytoplasmic membrane anchor for the Z ring. Also required for the recruitment to the septal ring of downstream cell division proteins. This Stutzerimonas stutzeri (strain A1501) (Pseudomonas stutzeri) protein is Cell division protein ZipA.